Here is a 325-residue protein sequence, read N- to C-terminus: UPF0285 protein MmarC6_0247 (325 aa).

It belongs to the UPF0285 family.

The sequence is that of UPF0285 protein MmarC6_0247 from Methanococcus maripaludis (strain C6 / ATCC BAA-1332).